A 377-amino-acid chain; its full sequence is Mitogen-activated protein kinase pmk-1 (377 aa).

A Protein kinase domain is found at 35–319 (YINLTPIGTG…AKEAMEHEYL (285 aa)). Residues 41–49 (IGTGAYGTV) and Lys-64 contribute to the ATP site. The active-site Proton acceptor is the Asp-179. Thr-191 carries the post-translational modification Phosphothreonine. A TXY motif is present at residues 191-193 (TGY). Position 193 is a phosphotyrosine (Tyr-193).

It belongs to the protein kinase superfamily. CMGC Ser/Thr protein kinase family. MAP kinase subfamily. As to quaternary structure, interacts with transcription factor atf-7; perhaps in a manner dependent on dual specificity protein kinase sek-1. Mg(2+) is required as a cofactor. Requires Mn(2+) as cofactor. Dually phosphorylated on Thr-191 and Tyr-193, probably by sek-1, which activates the enzyme. Increased phosphorylation in response to the heavy metal arsenite. Increased phosphorylation in response to intestinal colonization by probiotic Lactobacillus fermentum strain JDFM216. Expressed in intestinal cells.

It localises to the nucleus. It catalyses the reaction L-seryl-[protein] + ATP = O-phospho-L-seryl-[protein] + ADP + H(+). The catalysed reaction is L-threonyl-[protein] + ATP = O-phospho-L-threonyl-[protein] + ADP + H(+). With respect to regulation, activated by phosphorylation on threonine and tyrosine. Inhibited by pyridinyl-imidazole related compounds. Functionally, serine/threonine kinase which responds to activation by environmental stress and pro-inflammatory cytokines by phosphorylating downstream targets. As part of a MAP kinase signaling pathway, plays a role in modulation of lifespan and immunity. Phosphorylates skn-1 which probably regulates skn-1 nuclear translocation in response to oxidative stress. Probably by activating skn-1, involved in the up-regulation of gcs-1 and glutathione-S-transferase gst-4 expression upon bacteria infection. Up-regulates expression of gcs-1 in intestinal cells upon arsenite treatment. Functions downstream of the MAPKK sek-1 and the MAPKKK nsy-1 as the MAP kinase which regulates pathogen resistance and responses to oxidative stress. Required for expression of antimicrobial peptide nlp-29 in response to fungal infection or physical injury. Involved in resistance to the nematotoxic C.cinerea galectin (Cgl2). May play a redundant role with other MAP kinases in susceptibility to anoxia, downstream of tir-1/nsy-1. Phosphorylates transcription factor rnt-1 during oxidative stress which results in rnt-1 stabilization in the intestine. Phosphorylates transcription factor atf-7 during pathogen infection resulting in modulation of target genes. Probably downstream of nsy-1 and sek-1, involved in germline apoptosis induced by heavy metals, such as Cu(2+). Regulates the basal expression of immune effector genes including irg-4, irg-5, mul-1 and drd-50. The sequence is that of Mitogen-activated protein kinase pmk-1 from Caenorhabditis elegans.